We begin with the raw amino-acid sequence, 224 residues long: UPF0758 protein PST_0473 (224 aa).

The MPN domain occupies 102 to 224 (ALESPQAVRD…PLSMAEYGWM (123 aa)). Positions 173, 175, and 186 each coordinate Zn(2+). The short motif at 173 to 186 (HNHPSGVAEPSQAD) is the JAMM motif element.

It belongs to the UPF0758 family.

The sequence is that of UPF0758 protein PST_0473 from Stutzerimonas stutzeri (strain A1501) (Pseudomonas stutzeri).